The chain runs to 674 residues: MIHKNNYQQLRIGLASPEQIRAWAERILPTGEIVGKVTQPYTLHYKTHKPERDGLFCERIFGPIKSGFCACGNYQAVDNGKEFSSFCKQCGVEFTESRVRRYQMGYIELACPVTHVWYLKRLPSYIANLLAKPLNDLESLVYCDITYPNLYLARPIAEKPTLLQLKGFFKYEDQSWRYLFPRFFSTRGFEAFKSREIATGGDAVRKELASLNLKTVMECTYLEWKDLAKQKPTGNEWEDRGIQRIKDFMVRRIRLVKHFLYTDVKPEWMVLSLLPVLPPELRPMIEVSGGLLLTSDLNELYRKVIYRNNTLIDFLLRSEFTPEGLIVCQKRLVQEAVDALIDNGIRGQPIRDSHNRPYKSFSDIIEGKEGRFRENLLGKRVDYSGRSVIVVGPSLPLHRCGLPREMAIELFQAFVIRGLIGRYLAQNLRDAKNMIQNKEPIIWKILRDVMQGHPVLLNRAPTLHRLGIQAFQPILIEGRAIRLHPLVCGGFNADFDGDQMAVHVPLSLEAQAEARFLMLSHTNLLSPATGDPIAVPTQDMLLGLHILTIEDSQGIYGVRYFPYSKRNCTSFFKIPYFNSYDDVLRAKEQRQIHFYSPIWLRWKGFLRVITSINREFPIEIQYESSNISVHIYENYQIRKDKKGNRLSLYIRTTAGRVLFNQQIEEAIQGTLKAF.

Zn(2+) is bound by residues cysteine 69, cysteine 71, cysteine 87, and cysteine 90. Residues aspartate 494, aspartate 496, and aspartate 498 each contribute to the Mg(2+) site.

This sequence belongs to the RNA polymerase beta' chain family. RpoC1 subfamily. In terms of assembly, in plastids the minimal PEP RNA polymerase catalytic core is composed of four subunits: alpha, beta, beta', and beta''. When a (nuclear-encoded) sigma factor is associated with the core the holoenzyme is formed, which can initiate transcription. It depends on Mg(2+) as a cofactor. Requires Zn(2+) as cofactor.

The protein localises to the plastid. Its subcellular location is the chloroplast. It catalyses the reaction RNA(n) + a ribonucleoside 5'-triphosphate = RNA(n+1) + diphosphate. Its function is as follows. DNA-dependent RNA polymerase catalyzes the transcription of DNA into RNA using the four ribonucleoside triphosphates as substrates. The protein is DNA-directed RNA polymerase subunit beta' of Psilotum nudum (Whisk fern).